The sequence spans 231 residues: Proteasome subunit alpha type-2 (231 aa).

Belongs to the peptidase T1A family. As to quaternary structure, the 26S proteasome consists of a 20S proteasome core and two 19S regulatory subunits. The 20S proteasome core is composed of 28 subunits that are arranged in four stacked rings, resulting in a barrel-shaped structure. The two end rings are each formed by seven alpha subunits, and the two central rings are each formed by seven beta subunits. The catalytic chamber with the active sites is on the inside of the barrel.

It localises to the cytoplasm. The protein localises to the nucleus. Its function is as follows. The proteasome is a multicatalytic proteinase complex which is characterized by its ability to cleave peptides with Arg, Phe, Tyr, Leu, and Glu adjacent to the leaving group at neutral or slightly basic pH. The proteasome has an ATP-dependent proteolytic activity. The sequence is that of Proteasome subunit alpha type-2 (pas-2) from Caenorhabditis elegans.